The primary structure comprises 322 residues: Chromoplast-specific carotenoid-associated protein, chromoplastic (322 aa).

The transit peptide at 1–58 directs the protein to the chromoplast; the sequence is MAFVSQFNQLPCKTLALNPPQPQLTSKPSVFPIASIGATARAAAGKSLISVRPAFKVR. Residues 67–88 form a disordered region; the sequence is GEDKDEKYGDDSSVAVAEKEEE.

Belongs to the PAP/fibrillin family. Expressed in corollas. Not detected in fruits, stems, leaves, and roots.

The protein resides in the plastid. It localises to the chromoplast. Its function is as follows. May be involved in carotenoid sequestration within chromoplasts. This is Chromoplast-specific carotenoid-associated protein, chromoplastic (CHRC) from Cucumis sativus (Cucumber).